Here is a 113-residue protein sequence, read N- to C-terminus: Large ribosomal subunit protein uL22 (113 aa).

It belongs to the universal ribosomal protein uL22 family. Part of the 50S ribosomal subunit.

Its function is as follows. This protein binds specifically to 23S rRNA; its binding is stimulated by other ribosomal proteins, e.g. L4, L17, and L20. It is important during the early stages of 50S assembly. It makes multiple contacts with different domains of the 23S rRNA in the assembled 50S subunit and ribosome. In terms of biological role, the globular domain of the protein is located near the polypeptide exit tunnel on the outside of the subunit, while an extended beta-hairpin is found that lines the wall of the exit tunnel in the center of the 70S ribosome. This is Large ribosomal subunit protein uL22 from Geobacillus kaustophilus (strain HTA426).